Consider the following 553-residue polypeptide: MAAPKTAAVGPLVGAVVQGTNSTRFLVFNSKTAELLSHHKVELTQEFPKEGWVEQDPKEILQSVYECIARTCEKLDELNIDISNIKAVGVSNQRETTVIWDKLTGEPLYNAVVWLDLRTQTTVEDLSKKIPGNSNFVKSKTGLPLSTYFSAVKLRWMLDNVRNVQKAVEEGRALFGTIDSWLIWSLTGGVNGGVHCTDVTNASRTMLFNIHSLEWDKELCDFFEIPMDLLPNVFSSSEIYGLIKTGALEGVPISGCLGDQCAALVGQMCFQEGQAKNTYGTGCFLLCNTGRKCVFSEHGLLTTVAYKLGREKPAYYALEGSVAIAGAVIRWLRDNLGIIETSGDIERLAKEVGTSYGCYFVPAFSGLYAPYWEPSARGILCGLTQFTNKCHIAFAALEAVCFQTREILEAMNRDCGIPLRHLQVDGGMTNNKVLMQLQADILHIPVIKPFMPETTALGAAMAAGAAEGVSVWSLEPQALSVLRMERFEPQIQATESEIRYATWKKAVMKSMGWVTSQSPEGGDPSIFSSLPLGFFIVSSMVMLIGARYISGVP.

Thr-20 is a binding site for substrate. Residue Arg-24 coordinates ATP. 3 residues coordinate substrate: Arg-94, Tyr-148, and Asp-259. ATP is bound by residues Thr-281, Gly-326, and 427-431; that span reads GMTNN. The chain crosses the membrane as a helical span at residues 526–546; that stretch reads IFSSLPLGFFIVSSMVMLIGA.

This sequence belongs to the FGGY kinase family. Interacts with ARMC12. Interacts with PLD6. As to expression, testis-specific. Expressed in the midpiece of spermatozoa.

The protein localises to the mitochondrion outer membrane. The protein resides in the cytoplasm. The catalysed reaction is glycerol + ATP = sn-glycerol 3-phosphate + ADP + H(+). Its pathway is polyol metabolism; glycerol degradation via glycerol kinase pathway; sn-glycerol 3-phosphate from glycerol: step 1/1. Key enzyme in the regulation of glycerol uptake and metabolism. Essential for male fertility and sperm mitochondrial sheath formation. Required for proper arrangement of crescent-like mitochondria to form the mitochondrial sheath during spermatogenesis. Can induce mitochondrial clustering through interactions with PLD6 and up-regulation of phosphatidic acid synthesis in the mitochondria. The polypeptide is Glycerol kinase 2 (GK2) (Homo sapiens (Human)).